The primary structure comprises 197 residues: Nucleoid occlusion factor SlmA (197 aa).

In terms of domain architecture, HTH tetR-type spans 6-66 (NDRRTQILQA…GLIEFIEESL (61 aa)). Residues 29-48 (TTAALAKQVGVSEAALYRHF) constitute a DNA-binding region (H-T-H motif).

It belongs to the nucleoid occlusion factor SlmA family. In terms of assembly, homodimer. Interacts with FtsZ.

It is found in the cytoplasm. The protein resides in the nucleoid. Required for nucleoid occlusion (NO) phenomenon, which prevents Z-ring formation and cell division over the nucleoid. Acts as a DNA-associated cell division inhibitor that binds simultaneously chromosomal DNA and FtsZ, and disrupts the assembly of FtsZ polymers. SlmA-DNA-binding sequences (SBS) are dispersed on non-Ter regions of the chromosome, preventing FtsZ polymerization at these regions. The protein is Nucleoid occlusion factor SlmA of Marinomonas sp. (strain MWYL1).